The sequence spans 418 residues: MMRLYYFLSFLLLPIYFVIIFIRLLIGKEDIRRVKERFAIGKHRQDNRFLIWIHAASVGESMIALNLVDNISKHFPEVRFLVTSWTQSSAKILSTKLPKIATHQLLPIDNIIFTKIFLNNWKPDLGIFIESELWPGTINEAAKQCNLLLVNARMSDKSFESWKKRKGFFQLIVKNFSEVIVQSERDLQKFNELGISNTTNLGNIKFANEKLPVNQEELIKLSEHLKNKQVILFASTHPEDEEIILPIIKNLKKQVIDCYIILIPRHPERIKSILDNCIAQDLSATAKSQNDLPVLTDDLYIVDRFGEMGLFFSIASISFIGGSFKQGGHNILEAAHFSNCIIFGPDMSKNTDIAKGVLQSKAAIQIKSGEELLNMLEYLLDPNNSRELKNYQENSLKFVERNQKILDEYLQIITKFFP.

The chain crosses the membrane as a helical; Signal-anchor span at residues 7–27 (FLSFLLLPIYFVIIFIRLLIG). The active-site Proton acceptor is Glu-60. CMP contacts are provided by residues 264–265 (PR), 305–307 (FGE), and 330–333 (NILE).

It belongs to the glycosyltransferase group 1 family. Glycosyltransferase 30 subfamily.

The protein localises to the cell inner membrane. The enzyme catalyses lipid IVA (E. coli) + CMP-3-deoxy-beta-D-manno-octulosonate = alpha-Kdo-(2-&gt;6)-lipid IVA (E. coli) + CMP + H(+). It participates in bacterial outer membrane biogenesis; LPS core biosynthesis. In terms of biological role, involved in lipopolysaccharide (LPS) biosynthesis. Catalyzes the transfer of 3-deoxy-D-manno-octulosonate (Kdo) residue(s) from CMP-Kdo to lipid IV(A), the tetraacyldisaccharide-1,4'-bisphosphate precursor of lipid A. The sequence is that of 3-deoxy-D-manno-octulosonic acid transferase (waaA) from Rickettsia bellii (strain RML369-C).